Reading from the N-terminus, the 435-residue chain is Tol-Pal system protein TolB (435 aa).

Positions 1–20 (MRKIIAGVFIFVFLISNLYA) are cleaved as a signal peptide.

The protein belongs to the TolB family. The Tol-Pal system is composed of five core proteins: the inner membrane proteins TolA, TolQ and TolR, the periplasmic protein TolB and the outer membrane protein Pal. They form a network linking the inner and outer membranes and the peptidoglycan layer.

It localises to the periplasm. Its function is as follows. Part of the Tol-Pal system, which plays a role in outer membrane invagination during cell division and is important for maintaining outer membrane integrity. This chain is Tol-Pal system protein TolB, found in Francisella tularensis subsp. mediasiatica (strain FSC147).